A 209-amino-acid polypeptide reads, in one-letter code: uncharacterized protein (209 aa).

One can recognise a Nudix hydrolase domain in the interval 1–167 (MRNSAGLFMI…LNTYASSNYG (167 aa)).

This is an uncharacterized protein from Orgyia pseudotsugata (Douglas-fir tussock moth).